The primary structure comprises 131 residues: Profilin-6 (131 aa).

Cys13 and Cys115 are disulfide-bonded. An Involved in PIP2 interaction motif is present at residues 81–97 (AVIRGKKGSGGITVKKT). Thr111 carries the post-translational modification Phosphothreonine.

Belongs to the profilin family. As to quaternary structure, occurs in many kinds of cells as a complex with monomeric actin in a 1:1 ratio. Post-translationally, phosphorylated by MAP kinases.

It localises to the cytoplasm. The protein localises to the cytoskeleton. In terms of biological role, binds to actin and affects the structure of the cytoskeleton. At high concentrations, profilin prevents the polymerization of actin, whereas it enhances it at low concentrations. The chain is Profilin-6 from Zea mays (Maize).